Consider the following 164-residue polypeptide: DNA-directed RNA polymerase 19 kDa subunit (164 aa).

Over residues 1–35 (MADTDDIIDYESDDLTEYEDDEEEEEDGESLETSD) the composition is skewed to acidic residues. A disordered region spans residues 1–39 (MADTDDIIDYESDDLTEYEDDEEEEEDGESLETSDIDPK).

This sequence belongs to the poxviridae DNA-directed RNA polymerase 19 kDa subunit family. As to quaternary structure, the DNA-dependent RNA polymerase used for intermediate and late genes expression consists of eight subunits Rpo30/OPG66, Rpo7/OPG90, Rpo22/OPG103, Rpo147/OPG105, Rpo18/OPG119, Rpo19/OPG131, Rpo132/OPG151 and Rpo35/OPG156. The same holoenzyme, with the addition of the transcription-specificity factor OPG109, is used for early gene expression.

Its subcellular location is the virion. The enzyme catalyses RNA(n) + a ribonucleoside 5'-triphosphate = RNA(n+1) + diphosphate. Its function is as follows. Part of the DNA-dependent RNA polymerase which catalyzes the transcription of viral DNA into RNA using the four ribonucleoside triphosphates as substrates. Responsible for the transcription of early, intermediate and late genes. DNA-dependent RNA polymerase associates with the early transcription factor (ETF), itself composed of OPG118 and OPG133, thereby allowing the early genes transcription. Late transcription, and probably also intermediate transcription, require newly synthesized RNA polymerase. In Homo sapiens (Human), this protein is DNA-directed RNA polymerase 19 kDa subunit (OPG131).